The following is a 459-amino-acid chain: Ribulose bisphosphate carboxylase (459 aa).

Asn-111 lines the substrate pocket. Residue Lys-166 is the Proton acceptor of the active site. Position 168 (Lys-168) interacts with substrate. Mg(2+) is bound by residues Lys-191, Asp-193, and Glu-194. An N6-carboxylysine modification is found at Lys-191. His-287 serves as the catalytic Proton acceptor. Substrate is bound by residues Arg-288, His-321, and Ser-368.

Belongs to the RuBisCO large chain family. Type II subfamily. Homodimer. Requires Mg(2+) as cofactor.

The enzyme catalyses 2 (2R)-3-phosphoglycerate + 2 H(+) = D-ribulose 1,5-bisphosphate + CO2 + H2O. The catalysed reaction is D-ribulose 1,5-bisphosphate + O2 = 2-phosphoglycolate + (2R)-3-phosphoglycerate + 2 H(+). Its function is as follows. RuBisCO catalyzes two reactions: the carboxylation of D-ribulose 1,5-bisphosphate, the primary event in carbon dioxide fixation, as well as the oxidative fragmentation of the pentose substrate. Both reactions occur simultaneously and in competition at the same active site. The chain is Ribulose bisphosphate carboxylase from Polaromonas naphthalenivorans (strain CJ2).